A 308-amino-acid polypeptide reads, in one-letter code: Protoheme IX farnesyltransferase 2 (308 aa).

The next 9 helical transmembrane spans lie at 20–40 (VTKPGIIMGNLIAVVGGFLLA), 47–67 (AVLMLATLVGLSLVVASGCAI), 92–114 (IPLKQVLGLGIALGVLGFGLLAW), 118–137 (LAALLFAAFGYLVYVGLYSL), 144–164 (VYGTLVGSLSGAVPPVVGYCA), 174–194 (LILLAMFSLWQMPHSYAIAIF), 218–238 (LHIVFYIALFALVSTLLPLAG), 240–260 (TGVGFMAVSCVTSFWWLLMAL), and 275–295 (QVFGFSILTIAILSLTMALDF).

The protein belongs to the UbiA prenyltransferase family. Protoheme IX farnesyltransferase subfamily.

The protein localises to the cell inner membrane. It catalyses the reaction heme b + (2E,6E)-farnesyl diphosphate + H2O = Fe(II)-heme o + diphosphate. Its pathway is porphyrin-containing compound metabolism; heme O biosynthesis; heme O from protoheme: step 1/1. Converts heme B (protoheme IX) to heme O by substitution of the vinyl group on carbon 2 of heme B porphyrin ring with a hydroxyethyl farnesyl side group. This is Protoheme IX farnesyltransferase 2 from Shewanella loihica (strain ATCC BAA-1088 / PV-4).